We begin with the raw amino-acid sequence, 144 residues long: Large ribosomal subunit protein uL11 (144 aa).

The protein belongs to the universal ribosomal protein uL11 family. Part of the ribosomal stalk of the 50S ribosomal subunit. Interacts with L10 and the large rRNA to form the base of the stalk. L10 forms an elongated spine to which L12 dimers bind in a sequential fashion forming a multimeric L10(L12)X complex. In terms of processing, one or more lysine residues are methylated.

In terms of biological role, forms part of the ribosomal stalk which helps the ribosome interact with GTP-bound translation factors. The polypeptide is Large ribosomal subunit protein uL11 (Nocardia farcinica (strain IFM 10152)).